The chain runs to 152 residues: UPF0225 protein YchJ (152 aa).

The protein belongs to the UPF0225 family.

The polypeptide is UPF0225 protein YchJ (Escherichia coli O127:H6 (strain E2348/69 / EPEC)).